Here is a 105-residue protein sequence, read N- to C-terminus: uncharacterized protein (105 aa).

A helical transmembrane segment spans residues 64–84; it reads ILLISIFFLLLFALPQHTMGI.

It localises to the membrane. This is an uncharacterized protein from Saccharomyces cerevisiae (strain ATCC 204508 / S288c) (Baker's yeast).